The following is a 334-amino-acid chain: Heat-inducible transcription repressor HrcA (334 aa).

It belongs to the HrcA family.

Negative regulator of class I heat shock genes (grpE-dnaK-dnaJ and groELS operons). Prevents heat-shock induction of these operons. This Paracidovorax citrulli (strain AAC00-1) (Acidovorax citrulli) protein is Heat-inducible transcription repressor HrcA.